A 605-amino-acid chain; its full sequence is Aspartate--tRNA(Asp/Asn) ligase (605 aa).

An L-aspartate-binding site is contributed by Glu-178. Residues 202-205 (QLFK) are aspartate. Position 224 (Arg-224) interacts with L-aspartate. ATP is bound by residues 224-226 (RDE) and Gln-233. His-458 lines the L-aspartate pocket. Glu-488 contributes to the ATP binding site. Position 495 (Arg-495) interacts with L-aspartate. 540-543 (GLDR) is a binding site for ATP. The interval 580 to 605 (QQLKELHVTPAKPAKTTAKTKPRPAD) is disordered.

Belongs to the class-II aminoacyl-tRNA synthetase family. Type 1 subfamily. As to quaternary structure, homodimer.

Its subcellular location is the cytoplasm. It catalyses the reaction tRNA(Asx) + L-aspartate + ATP = L-aspartyl-tRNA(Asx) + AMP + diphosphate. Its function is as follows. Aspartyl-tRNA synthetase with relaxed tRNA specificity since it is able to aspartylate not only its cognate tRNA(Asp) but also tRNA(Asn). Reaction proceeds in two steps: L-aspartate is first activated by ATP to form Asp-AMP and then transferred to the acceptor end of tRNA(Asp/Asn). The polypeptide is Aspartate--tRNA(Asp/Asn) ligase (Thermosynechococcus vestitus (strain NIES-2133 / IAM M-273 / BP-1)).